The primary structure comprises 383 residues: tRNA-specific 2-thiouridylase MnmA (383 aa).

ATP-binding positions include 30 to 37 and methionine 56; that span reads GMSGGVDS. Residues 116–118 form an interaction with target base in tRNA region; the sequence is NPD. The active-site Nucleophile is the cysteine 121. A disulfide bond links cysteine 121 and cysteine 218. Glycine 146 is an ATP binding site. Positions 168–170 are interaction with tRNA; sequence KDQ. Cysteine 218 (cysteine persulfide intermediate) is an active-site residue. The interval 330–331 is interaction with tRNA; it reads RY.

It belongs to the MnmA/TRMU family.

The protein localises to the cytoplasm. It catalyses the reaction S-sulfanyl-L-cysteinyl-[protein] + uridine(34) in tRNA + AH2 + ATP = 2-thiouridine(34) in tRNA + L-cysteinyl-[protein] + A + AMP + diphosphate + H(+). Catalyzes the 2-thiolation of uridine at the wobble position (U34) of tRNA, leading to the formation of s(2)U34. This chain is tRNA-specific 2-thiouridylase MnmA, found in Haemophilus influenzae (strain 86-028NP).